A 255-amino-acid chain; its full sequence is Probable transcriptional regulatory protein PCC7424_2775 (255 aa).

It belongs to the TACO1 family.

It is found in the cytoplasm. This is Probable transcriptional regulatory protein PCC7424_2775 from Gloeothece citriformis (strain PCC 7424) (Cyanothece sp. (strain PCC 7424)).